The sequence spans 595 residues: L-fucose isomerase (595 aa).

Residues Glu-341 and Asp-365 each act as proton acceptor in the active site. 3 residues coordinate Mn(2+): Glu-341, Asp-365, and His-531.

It belongs to the L-fucose isomerase family. The cofactor is Mn(2+).

It is found in the cytoplasm. The catalysed reaction is L-fucose = L-fuculose. It functions in the pathway carbohydrate degradation; L-fucose degradation; L-lactaldehyde and glycerone phosphate from L-fucose: step 1/3. In terms of biological role, converts the aldose L-fucose into the corresponding ketose L-fuculose. This Clostridium perfringens (strain 13 / Type A) protein is L-fucose isomerase.